Reading from the N-terminus, the 319-residue chain is Transaldolase (319 aa).

Lys-126 acts as the Schiff-base intermediate with substrate in catalysis.

This sequence belongs to the transaldolase family. Type 1 subfamily. In terms of assembly, homodimer.

The protein resides in the cytoplasm. The enzyme catalyses D-sedoheptulose 7-phosphate + D-glyceraldehyde 3-phosphate = D-erythrose 4-phosphate + beta-D-fructose 6-phosphate. Its pathway is carbohydrate degradation; pentose phosphate pathway; D-glyceraldehyde 3-phosphate and beta-D-fructose 6-phosphate from D-ribose 5-phosphate and D-xylulose 5-phosphate (non-oxidative stage): step 2/3. Its function is as follows. Transaldolase is important for the balance of metabolites in the pentose-phosphate pathway. This is Transaldolase from Bordetella avium (strain 197N).